The primary structure comprises 263 residues: Small ribosomal subunit protein eS4, X isoform (263 aa).

The 63-residue stretch at 42–104 (LPLIIFLRNR…TGEHFRLVYD (63 aa)) folds into the S4 RNA-binding domain. A Glycyl lysine isopeptide (Lys-Gly) (interchain with G-Cter in SUMO2) cross-link involves residue K230. At K233 the chain carries N6-acetyllysine.

It belongs to the eukaryotic ribosomal protein eS4 family. As to quaternary structure, component of the small ribosomal subunit. Part of the small subunit (SSU) processome, composed of more than 70 proteins and the RNA chaperone small nucleolar RNA (snoRNA) U3. Identified in a IGF2BP1-dependent mRNP granule complex containing untranslated mRNAs.

Its subcellular location is the cytoplasm. It is found in the nucleus. It localises to the nucleolus. Its function is as follows. Component of the small ribosomal subunit. The ribosome is a large ribonucleoprotein complex responsible for the synthesis of proteins in the cell. Part of the small subunit (SSU) processome, first precursor of the small eukaryotic ribosomal subunit. During the assembly of the SSU processome in the nucleolus, many ribosome biogenesis factors, an RNA chaperone and ribosomal proteins associate with the nascent pre-rRNA and work in concert to generate RNA folding, modifications, rearrangements and cleavage as well as targeted degradation of pre-ribosomal RNA by the RNA exosome. The protein is Small ribosomal subunit protein eS4, X isoform (RPS4X) of Monodelphis domestica (Gray short-tailed opossum).